A 755-amino-acid chain; its full sequence is Kojibiose phosphorylase (755 aa).

Residue 333–334 (WD) coordinates substrate. The active-site Proton donor is Glu-473. 573 to 574 (KQ) is a binding site for substrate.

Belongs to the glycosyl hydrolase 65 family.

It carries out the reaction kojibiose + phosphate = beta-D-glucose 1-phosphate + D-glucose. Its function is as follows. In vitro catalyzes the phosphorolysis of D-kojibiose into beta-D-glucose 1-phosphate and D-glucose. No other disaccharides tested substitute for D-kojibiose. In the reverse direction disaccharides can be formed from beta-D-glucose 1-phosphate plus D-glucose, L-sorbose, D-sorbitol, L-iditol or 1,5-anhydro-D-glucitol, but with low efficiency. The beta-D-glucose 1-phosphate product is the substrate for YcjU (AC P77366), the next apparent enzyme in the putative biochemical pathway encoded in this locus (yjcM to ycjW). The chain is Kojibiose phosphorylase (ycjT) from Escherichia coli (strain K12).